We begin with the raw amino-acid sequence, 424 residues long: Enolase (424 aa).

Gln163 provides a ligand contact to (2R)-2-phosphoglycerate. Glu205 acts as the Proton donor in catalysis. Residues Asp242, Glu285, and Asp312 each contribute to the Mg(2+) site. (2R)-2-phosphoglycerate-binding residues include Lys337, Arg366, Ser367, and Lys388. The Proton acceptor role is filled by Lys337.

Belongs to the enolase family. It depends on Mg(2+) as a cofactor.

It is found in the cytoplasm. The protein localises to the secreted. The protein resides in the cell surface. The enzyme catalyses (2R)-2-phosphoglycerate = phosphoenolpyruvate + H2O. Its pathway is carbohydrate degradation; glycolysis; pyruvate from D-glyceraldehyde 3-phosphate: step 4/5. Its function is as follows. Catalyzes the reversible conversion of 2-phosphoglycerate (2-PG) into phosphoenolpyruvate (PEP). It is essential for the degradation of carbohydrates via glycolysis. This is Enolase from Roseobacter denitrificans (strain ATCC 33942 / OCh 114) (Erythrobacter sp. (strain OCh 114)).